Consider the following 320-residue polypeptide: Malate dehydrogenase (320 aa).

NAD(+) is bound by residues 10 to 15 (GSGMIG) and D34. Substrate contacts are provided by R83 and R89. NAD(+) contacts are provided by residues N96 and 119 to 121 (ITN). Positions 121 and 152 each coordinate substrate. Catalysis depends on H176, which acts as the Proton acceptor.

This sequence belongs to the LDH/MDH superfamily. MDH type 3 family.

The catalysed reaction is (S)-malate + NAD(+) = oxaloacetate + NADH + H(+). Catalyzes the reversible oxidation of malate to oxaloacetate. The protein is Malate dehydrogenase of Brucella melitensis biotype 1 (strain ATCC 23456 / CCUG 17765 / NCTC 10094 / 16M).